The following is a 365-amino-acid chain: MNITNCTTDASMVVRPKTVTEKMLICMTLVIITTLTMLLNSAVIMAICTTKKLHQPANYLICSLAVTDLLVAVLVMPLSIMYIVMDSWRLGYFICEVWLSVDMTCCTCSILHLCVIALDRYWAITNAIEYARKRTAKRAGLMILTVWTISIFISMPPLFWRSHRQLSPPPSQCTIQHDHVIYTIYSTFGAFYIPLTLILILYYRIYHAAKSLYQKRGSSRHLSNRSTDSQNSFASCKLTQTFCVSDFSTSDPTTEFEKIHASIRIPPFDNDLDHPGERQQISSTRERKAARILGLILGAFILSWLPFFIKELIVGLSIYTVSSEVGDFLTWLGYVNSLINPLLYTSFNEDFKLAFKKLIRCREHT.

Over M1 to K22 the chain is Extracellular. 2 N-linked (GlcNAc...) asparagine glycosylation sites follow: N2 and N5. A helical membrane pass occupies residues M23 to I47. Residues C48 to Y59 lie on the Cytoplasmic side of the membrane. A helical transmembrane segment spans residues L60–Y82. The Extracellular portion of the chain corresponds to I83–E96. C95 and C173 are oxidised to a cystine. A helical transmembrane segment spans residues V97 to L118. Ergotamine is bound by residues D102 and T107. The short motif at D119–Y121 is the DRY motif; important for ligand-induced conformation changes element. The Cytoplasmic portion of the chain corresponds to D119–R138. The chain crosses the membrane as a helical span at residues A139–W160. Over R161–H179 the chain is Extracellular. I175 provides a ligand contact to ergotamine. The helical transmembrane segment at V180–Y202 threads the bilayer. Residues Y203–R291 lie on the Cytoplasmic side of the membrane. A helical membrane pass occupies residues I292–V314. The Extracellular portion of the chain corresponds to G315–E324. The helical transmembrane segment at V325–F347 threads the bilayer. The short motif at N340–Y344 is the NPxxY motif; important for ligand-induced conformation changes and signaling element. Residues N348 to T365 lie on the Cytoplasmic side of the membrane.

This sequence belongs to the G-protein coupled receptor 1 family. In terms of tissue distribution, detected in the brain with the greatest abundance in the hippocampus, followed by the olfactory bulb. Lower levels are detected in the cortex, thalamus, pons, hypothalamus, midbrain, striatum, and cerebellum.

It localises to the cell membrane. Functionally, G-protein coupled receptor for 5-hydroxytryptamine (serotonin). Also functions as a receptor for various alkaloids and psychoactive substances. Ligand binding causes a conformation change that triggers signaling via guanine nucleotide-binding proteins (G proteins) and modulates the activity of down-stream effectors, such as adenylate cyclase. Signaling inhibits adenylate cyclase activity. The protein is 5-hydroxytryptamine receptor 1E (5HT1E) of Cavia porcellus (Guinea pig).